We begin with the raw amino-acid sequence, 407 residues long: Serine/threonine transporter SstT (407 aa).

Transmembrane regions (helical) follow at residues 14–34 (GSLV…ATVS), 48–68 (FVGA…AASI), 82–102 (IVIL…LMSF), 141–161 (AVIT…GLAL), 192–212 (IGIF…AIAG), 218–238 (LVLL…IVFF), 290–310 (IPLG…ILTL), 316–336 (MGIQ…GVSA), and 363–383 (VAMQ…SAET).

It belongs to the dicarboxylate/amino acid:cation symporter (DAACS) (TC 2.A.23) family.

It is found in the cell inner membrane. It carries out the reaction L-serine(in) + Na(+)(in) = L-serine(out) + Na(+)(out). The catalysed reaction is L-threonine(in) + Na(+)(in) = L-threonine(out) + Na(+)(out). Its function is as follows. Involved in the import of serine and threonine into the cell, with the concomitant import of sodium (symport system). This is Serine/threonine transporter SstT from Shewanella pealeana (strain ATCC 700345 / ANG-SQ1).